Reading from the N-terminus, the 497-residue chain is UPF0371 protein DIP2346 (497 aa).

This sequence belongs to the UPF0371 family.

The chain is UPF0371 protein DIP2346 from Corynebacterium diphtheriae (strain ATCC 700971 / NCTC 13129 / Biotype gravis).